The chain runs to 221 residues: Ribosomal RNA small subunit methyltransferase G 3 (221 aa).

S-adenosyl-L-methionine is bound by residues Gly-85, Phe-90, 136-137, and Arg-150; that span reads IE.

The protein belongs to the methyltransferase superfamily. RNA methyltransferase RsmG family.

The protein resides in the cytoplasm. The catalysed reaction is guanosine(527) in 16S rRNA + S-adenosyl-L-methionine = N(7)-methylguanosine(527) in 16S rRNA + S-adenosyl-L-homocysteine. Specifically methylates the N7 position of guanine in position 527 of 16S rRNA. The sequence is that of Ribosomal RNA small subunit methyltransferase G 3 from Bdellovibrio bacteriovorus (strain ATCC 15356 / DSM 50701 / NCIMB 9529 / HD100).